Reading from the N-terminus, the 392-residue chain is Protein SRL2 (392 aa).

S11 carries the phosphoserine modification. The tract at residues 18–52 (KPSETPKMEEEKLEVTNVNASSSKKVHKSKKSTSK) is disordered. The segment covering 21-31 (ETPKMEEEKLE) has biased composition (basic and acidic residues). Over residues 41–50 (KKVHKSKKST) the composition is skewed to basic residues. At S139 the chain carries Phosphoserine. The segment at 284 to 303 (EDSTAVTNENGHISSEKNLK) is disordered. Positions 287 to 296 (TAVTNENGHI) are enriched in polar residues.

The protein localises to the cytoplasm. It is found in the nucleus. The sequence is that of Protein SRL2 (SRL2) from Saccharomyces cerevisiae (strain ATCC 204508 / S288c) (Baker's yeast).